We begin with the raw amino-acid sequence, 78 residues long: Acyl carrier protein (78 aa).

In terms of domain architecture, Carrier spans 2 to 77 (SDILERVRKI…DAVKFITEKT (76 aa)). Residue Ser37 is modified to O-(pantetheine 4'-phosphoryl)serine.

It belongs to the acyl carrier protein (ACP) family. Post-translationally, 4'-phosphopantetheine is transferred from CoA to a specific serine of apo-ACP by AcpS. This modification is essential for activity because fatty acids are bound in thioester linkage to the sulfhydryl of the prosthetic group.

It is found in the cytoplasm. It functions in the pathway lipid metabolism; fatty acid biosynthesis. Functionally, carrier of the growing fatty acid chain in fatty acid biosynthesis. This chain is Acyl carrier protein, found in Caulobacter vibrioides (strain ATCC 19089 / CIP 103742 / CB 15) (Caulobacter crescentus).